The chain runs to 295 residues: HTH-type transcriptional regulator TdfR (295 aa).

Residues 1–58 (MEFRQLRYFVAAAEEGNVGAAARRLHISQPPVTRQIHALEQHLGVLLFERSARGVQLT) form the HTH lysR-type domain. The segment at residues 18–37 (VGAAARRLHISQPPVTRQIH) is a DNA-binding region (H-T-H motif).

This sequence belongs to the LysR transcriptional regulatory family.

The protein resides in the cytoplasm. Its function is as follows. Involved in the regulation of 3-chlorocatechol degradation. Transcriptional regulator of tfdB expression. Acts as a repressor in the absence of its effector (either 2-cis-chlorodiene lactone or chloromaleylacetate) but acts as an activator when its effector is present. In Cupriavidus pinatubonensis (strain JMP 134 / LMG 1197) (Cupriavidus necator (strain JMP 134)), this protein is HTH-type transcriptional regulator TdfR (tfdR).